The primary structure comprises 97 residues: Defensin-A2 (97 aa).

The first 19 residues, methionine 1–alanine 19, serve as a signal peptide directing secretion. Positions glutamine 20–arginine 61 are excised as a propeptide. 3 cysteine pairs are disulfide-bonded: cysteine 66/cysteine 93, cysteine 68/cysteine 82, and cysteine 72/cysteine 92. Positions threonine 96–serine 97 are excised as a propeptide.

Belongs to the alpha-defensin family. As to expression, highly expressed in intestine, expressed at lower levels in spleen, and at very low levels in kidney and lung.

It localises to the secreted. Has antimicrobial activity. This chain is Defensin-A2, found in Ornithorhynchus anatinus (Duckbill platypus).